A 423-amino-acid polypeptide reads, in one-letter code: Polyglutamylase complex subunit TTLL1 (423 aa).

Positions 1–367 (MAGKVKWVTD…NGEIPDCKWN (367 aa)) constitute a TTL domain. Residues K138, 144-145 (QG), 181-184 (SLYI), and 194-196 (KFD) each bind ATP. Q144 serves as a coordination point for a protein. An L-glutamate-binding site is contributed by R220. 241 to 242 (TN) provides a ligand contact to ATP. L-glutamate is bound at residue K259. Residues D313, E326, and N328 each coordinate Mg(2+). An L-glutamate-binding site is contributed by K344. The tract at residues 391–423 (GADRELRSRQGQSLGPRAGRSRDSGRAVLTTWK) is disordered.

It belongs to the tubulin polyglutamylase family. In terms of assembly, part of the neuronal tubulin polyglutamylase complex which contains TPGS1, TPGS2, TTLL1, LRRC49 and NICN1. Interacts with PCM1, CSTPP1 and LRRC49. Mg(2+) is required as a cofactor. In terms of tissue distribution, expressed in a wide range of tissues. Has a stronger expression in heart, brain and testis.

The protein resides in the cytoplasm. The protein localises to the cytoskeleton. It localises to the cilium basal body. It is found in the cilium axoneme. Its subcellular location is the cell projection. The protein resides in the cilium. The protein localises to the flagellum. The catalysed reaction is (L-glutamyl)(n)-gamma-L-glutamyl-L-glutamyl-[protein] + L-glutamate + ATP = (L-glutamyl)(n+1)-gamma-L-glutamyl-L-glutamyl-[protein] + ADP + phosphate + H(+). Functionally, catalytic subunit of a polyglutamylase complex which modifies tubulin, generating side chains of glutamate on the gamma-carboxyl group of specific glutamate residues within the C-terminal tail of tubulin. Probably involved in the side-chain elongation step of the polyglutamylation reaction rather than the initiation step. Modifies both alpha- and beta-tubulins with a preference for the alpha-tail. Unlike most polyglutamylases of the tubulin--tyrosine ligase family, only displays a catalytic activity when in complex with other proteins as it is most likely lacking domains important for autonomous activity. Part of the neuronal tubulin polyglutamylase complex. Mediates cilia and flagella polyglutamylation which is essential for their biogenesis and motility. Involved in respiratory motile cilia function through the regulation of beating asymmetry. Essential for sperm flagella biogenesis, motility and male fertility. Involved in KLF4 glutamylation which impedes its ubiquitination, thereby leading to somatic cell reprogramming, pluripotency maintenance and embryogenesis. This chain is Polyglutamylase complex subunit TTLL1, found in Homo sapiens (Human).